The primary structure comprises 202 residues: Small ribosomal subunit protein bS20c (202 aa).

A chloroplast-targeting transit peptide spans 1–79; the sequence is MATIVQCLSS…KPMRQLIVCE (79 aa). The tract at residues 89–110 is disordered; the sequence is SAAKRARQAEKRRVYNKSKKSE.

Belongs to the bacterial ribosomal protein bS20 family. As to quaternary structure, part of the 30S ribosomal subunit.

It is found in the plastid. The protein resides in the chloroplast. Its function is as follows. Binds directly to 16S ribosomal RNA. The polypeptide is Small ribosomal subunit protein bS20c (RPS20) (Arabidopsis thaliana (Mouse-ear cress)).